Reading from the N-terminus, the 897-residue chain is DNA polymerase I (897 aa).

A 5'-3' exonuclease domain is found at 1–317; it reads MEQPVIKEGT…ILDNTPALDN (317 aa). The 3'-5' exonuclease domain occupies 318 to 494; sequence APKKSRMIVL…RLCEYFEKGG (177 aa). The polymerase stretch occupies residues 498–896; it reads DLLTLARDIE…FIAKRWNELK (399 aa).

Belongs to the DNA polymerase type-A family. In terms of assembly, single-chain monomer with multiple functions.

It catalyses the reaction DNA(n) + a 2'-deoxyribonucleoside 5'-triphosphate = DNA(n+1) + diphosphate. Its function is as follows. In addition to polymerase activity, this DNA polymerase exhibits 3'-5' and 5'-3' exonuclease activity. The sequence is that of DNA polymerase I (polA) from Helicobacter pylori (strain J99 / ATCC 700824) (Campylobacter pylori J99).